Consider the following 156-residue polypeptide: uncharacterized protein (156 aa).

3 helical membrane passes run 42–59 (LLMMTFAIVNLADYMTTV), 79–98 (ASFLLLKIAIVATAFALLLY), and 105–127 (SLGRGIYIGLVAGLAISTAVLGI).

Its subcellular location is the cell membrane. This is an uncharacterized protein from Archaeoglobus fulgidus (strain ATCC 49558 / DSM 4304 / JCM 9628 / NBRC 100126 / VC-16).